A 334-amino-acid polypeptide reads, in one-letter code: MYRIAFDVNGNDNGVAAAVKASCQFLKENDNYEIILVGDEALINNELKLIENIPNSLKIINNPNVPSDVKNFHKSLRENTSMNDSIDLVAQGKADAVISSGDSGTYLACATFKLKRLQGVSRSAFMPLMPTIVGRKFLLLDVGANIECKSEYLVEWAKIANVYARTLLNIVNPRVSLINIGTEDYKGLEIVKEAAKELKDNKFINYIGYSEPRYLLDGVADVAVIDGYGGNLVLKSLEGAILSFKNLLKDKIMAKPIRKFGYLFLKGAFQDVAETLDYRNVGAAWLIGLNGLSIKCHGNSDSKAYLGALNQIKLVIKNNVLEAIKKELNDKPHE.

The protein belongs to the PlsX family. As to quaternary structure, homodimer. Probably interacts with PlsY.

The protein localises to the cytoplasm. It catalyses the reaction a fatty acyl-[ACP] + phosphate = an acyl phosphate + holo-[ACP]. The protein operates within lipid metabolism; phospholipid metabolism. Catalyzes the reversible formation of acyl-phosphate (acyl-PO(4)) from acyl-[acyl-carrier-protein] (acyl-ACP). This enzyme utilizes acyl-ACP as fatty acyl donor, but not acyl-CoA. The chain is Phosphate acyltransferase from Mycoplasmopsis agalactiae (strain NCTC 10123 / CIP 59.7 / PG2) (Mycoplasma agalactiae).